We begin with the raw amino-acid sequence, 260 residues long: MAGRWNLEGCTALVTGGSRGIGYGIVEELANLGASVYTCSRNQKELDECLTQWRSKGFNVEASVCDLSSRSEREEFMKTVSNHFHGKLNILVNNAGIVIYKEAKDYTMEDYSHIMSINFEAAYHLSVLAHPFLKASERGNVVFISSISGASALPYEAVYGATKGAMDQLTRCLAFEWAKDNIRVNGVGPGVIATSMVEMTIQDPEQKENLDKLIDRCALRRMGEPKELAAVVAFLCFPAASYVTGQIIYVDGGFMANGGF.

13 to 37 serves as a coordination point for NADP(+); sequence LVTGGSRGIGYGIVEELANLGASVY. Ser-146 provides a ligand contact to substrate. Tyr-159 functions as the Proton acceptor in the catalytic mechanism.

The protein belongs to the short-chain dehydrogenases/reductases (SDR) family.

The enzyme catalyses pseudotropine + NADP(+) = tropinone + NADPH + H(+). Its pathway is alkaloid biosynthesis; tropane alkaloid biosynthesis. Catalyzes the stereospecific reduction of tropinone to pseudotropine. In Hyoscyamus niger (Black henbane), this protein is Tropinone reductase 2 (TR2).